The following is a 318-amino-acid chain: Ubiquitin-like domain-containing CTD phosphatase 1 (318 aa).

One can recognise a Ubiquitin-like domain in the interval 3 to 81; the sequence is LSLIIKWGGQ…IMMMGTREES (79 aa). The FCP1 homology domain maps to 133 to 294; it reads PREGKKLLVL…VKLSQYLKEI (162 aa). Residues Asp143, Asp145, and Asp253 each coordinate Mg(2+).

The cofactor is Mg(2+).

The protein resides in the nucleus. The catalysed reaction is O-phospho-L-seryl-[protein] + H2O = L-seryl-[protein] + phosphate. It catalyses the reaction O-phospho-L-threonyl-[protein] + H2O = L-threonyl-[protein] + phosphate. Functionally, dephosphorylates 26S nuclear proteasomes, thereby decreasing their proteolytic activity. Recruited to the 19S regulatory particle of the 26S proteasome where it dephosphorylates 19S component psmc2 which impairs psmc2 ATPase activity and disrupts 26S proteasome assembly. Has also been reported to stimulate the proteolytic activity of the 26S proteasome. This Xenopus laevis (African clawed frog) protein is Ubiquitin-like domain-containing CTD phosphatase 1 (ublcp1).